The chain runs to 355 residues: UPF0324 membrane protein PA5383 (355 aa).

Transmembrane regions (helical) follow at residues 20 to 37 (IPGL…ILLG), 44 to 66 (HNGI…TLYP), 71 to 93 (GSAA…LYGL), 100 to 122 (IAGV…FGLA), 137 to 159 (TLLI…EPVV), 166 to 188 (VAVA…PALF), 233 to 255 (AVIA…SAWL), 275 to 297 (WFAV…PALV), 307 to 324 (LLAM…LSAI), and 331 to 353 (PLLL…TRLA).

Belongs to the UPF0324 family.

It is found in the cell membrane. In Pseudomonas aeruginosa (strain ATCC 15692 / DSM 22644 / CIP 104116 / JCM 14847 / LMG 12228 / 1C / PRS 101 / PAO1), this protein is UPF0324 membrane protein PA5383.